Consider the following 247-residue polypeptide: NAD-dependent protein deacetylase (247 aa).

The 247-residue stretch at 1 to 247 (METFKSILHE…EFARSLGMKK (247 aa)) folds into the Deacetylase sirtuin-type domain. Positions 20, 24, 31, 32, 100, 102, 103, and 118 each coordinate NAD(+). Phe31 serves as a coordination point for nicotinamide. 2 residues coordinate nicotinamide: Ile102 and Asp103. Catalysis depends on His118, which acts as the Proton acceptor. The Zn(2+) site is built by Cys126, Cys129, Cys146, and Cys156. NAD(+)-binding residues include Thr192, Ser193, Asn218, and Ile236.

It belongs to the sirtuin family. Class U subfamily. Zn(2+) is required as a cofactor.

It localises to the cytoplasm. It catalyses the reaction N(6)-acetyl-L-lysyl-[protein] + NAD(+) + H2O = 2''-O-acetyl-ADP-D-ribose + nicotinamide + L-lysyl-[protein]. NAD-dependent protein deacetylase which modulates the activities of several enzymes which are inactive in their acetylated form. The sequence is that of NAD-dependent protein deacetylase from Bacillus subtilis (strain 168).